Reading from the N-terminus, the 369-residue chain is Maltose/maltodextrin import ATP-binding protein MalK (369 aa).

Positions 4-234 constitute an ABC transporter domain; sequence VTLRNVCKSY…PKNRFVAGFI (231 aa). Position 36-43 (36-43) interacts with ATP; the sequence is GPSGCGKS.

The protein belongs to the ABC transporter superfamily. Maltooligosaccharide importer (TC 3.A.1.1.1) family. In terms of assembly, the complex is composed of two ATP-binding proteins (MalK), two transmembrane proteins (MalG and MalK) and a solute-binding protein (MalE).

It is found in the cell inner membrane. The catalysed reaction is D-maltose(out) + ATP + H2O = D-maltose(in) + ADP + phosphate + H(+). In terms of biological role, part of the ABC transporter complex MalEFGK involved in maltose/maltodextrin import. Responsible for energy coupling to the transport system. This is Maltose/maltodextrin import ATP-binding protein MalK from Aliivibrio fischeri (strain ATCC 700601 / ES114) (Vibrio fischeri).